A 1188-amino-acid chain; its full sequence is DNA-directed RNA polymerase subunit beta (1188 aa).

It belongs to the RNA polymerase beta chain family. In terms of assembly, the RNAP catalytic core consists of 2 alpha, 1 beta, 1 beta' and 1 omega subunit. When a sigma factor is associated with the core the holoenzyme is formed, which can initiate transcription.

The enzyme catalyses RNA(n) + a ribonucleoside 5'-triphosphate = RNA(n+1) + diphosphate. In terms of biological role, DNA-dependent RNA polymerase catalyzes the transcription of DNA into RNA using the four ribonucleoside triphosphates as substrates. This Streptococcus sanguinis (strain SK36) protein is DNA-directed RNA polymerase subunit beta.